The primary structure comprises 251 residues: Aspartate/glutamate leucyltransferase (251 aa).

The protein belongs to the R-transferase family. Bpt subfamily.

The protein resides in the cytoplasm. The catalysed reaction is N-terminal L-glutamyl-[protein] + L-leucyl-tRNA(Leu) = N-terminal L-leucyl-L-glutamyl-[protein] + tRNA(Leu) + H(+). It catalyses the reaction N-terminal L-aspartyl-[protein] + L-leucyl-tRNA(Leu) = N-terminal L-leucyl-L-aspartyl-[protein] + tRNA(Leu) + H(+). Functions in the N-end rule pathway of protein degradation where it conjugates Leu from its aminoacyl-tRNA to the N-termini of proteins containing an N-terminal aspartate or glutamate. The polypeptide is Aspartate/glutamate leucyltransferase (Xanthomonas euvesicatoria pv. vesicatoria (strain 85-10) (Xanthomonas campestris pv. vesicatoria)).